Consider the following 188-residue polypeptide: Elongation factor P (188 aa).

K34 bears the N6-(3,6-diaminohexanoyl)-5-hydroxylysine mark.

The protein belongs to the elongation factor P family. Post-translationally, may be beta-lysylated on the epsilon-amino group of Lys-34 by the combined action of EpmA and EpmB, and then hydroxylated on the C5 position of the same residue by EpmC (if this protein is present). Lysylation is critical for the stimulatory effect of EF-P on peptide-bond formation. The lysylation moiety may extend toward the peptidyltransferase center and stabilize the terminal 3-CCA end of the tRNA. Hydroxylation of the C5 position on Lys-34 may allow additional potential stabilizing hydrogen-bond interactions with the P-tRNA.

The protein localises to the cytoplasm. Its pathway is protein biosynthesis; polypeptide chain elongation. Functionally, involved in peptide bond synthesis. Alleviates ribosome stalling that occurs when 3 or more consecutive Pro residues or the sequence PPG is present in a protein, possibly by augmenting the peptidyl transferase activity of the ribosome. Modification of Lys-34 is required for alleviation. The polypeptide is Elongation factor P (Actinobacillus succinogenes (strain ATCC 55618 / DSM 22257 / CCUG 43843 / 130Z)).